A 330-amino-acid polypeptide reads, in one-letter code: Aspartate--ammonia ligase (330 aa).

This sequence belongs to the class-II aminoacyl-tRNA synthetase family. AsnA subfamily.

Its subcellular location is the cytoplasm. The catalysed reaction is L-aspartate + NH4(+) + ATP = L-asparagine + AMP + diphosphate + H(+). The protein operates within amino-acid biosynthesis; L-asparagine biosynthesis; L-asparagine from L-aspartate (ammonia route): step 1/1. The sequence is that of Aspartate--ammonia ligase from Pectobacterium carotovorum subsp. carotovorum (strain PC1).